A 430-amino-acid chain; its full sequence is Adenylosuccinate synthetase (430 aa).

GTP is bound by residues 13–19 and 41–43; these read GDEGKGK and GHT. The active-site Proton acceptor is the aspartate 14. Mg(2+) is bound by residues aspartate 14 and glycine 41. IMP is bound by residues 14-17, 39-42, threonine 130, arginine 144, glutamine 225, threonine 240, and arginine 304; these read DEGK and NAGH. The Proton donor role is filled by histidine 42. Residue 300 to 306 participates in substrate binding; it reads ATTGRAR. Residues arginine 306, 332–334, and 414–416 contribute to the GTP site; these read KLD and STG.

This sequence belongs to the adenylosuccinate synthetase family. As to quaternary structure, homodimer. The cofactor is Mg(2+).

The protein resides in the cytoplasm. It catalyses the reaction IMP + L-aspartate + GTP = N(6)-(1,2-dicarboxyethyl)-AMP + GDP + phosphate + 2 H(+). The protein operates within purine metabolism; AMP biosynthesis via de novo pathway; AMP from IMP: step 1/2. Plays an important role in the de novo pathway of purine nucleotide biosynthesis. Catalyzes the first committed step in the biosynthesis of AMP from IMP. The polypeptide is Adenylosuccinate synthetase (Pseudomonas syringae pv. syringae (strain B728a)).